The chain runs to 153 residues: MSLRPCLTPSSMQYSDIYIHTPHPHPHPHPHTPTHTHPHTPTPTPHPHPHTPHPHTTPTPTPHHTHTPHTTLSNLSLNLPSHYPTSPLVTLPHSTIPLPTTIHLSTYYYHPPPIITVTLQLPISNSTTITLLLPYHPPCPTHCTVVLPSILKR.

The segment at 17–78 (IYIHTPHPHP…HTTLSNLSLN (62 aa)) is disordered. Basic residues predominate over residues 22 to 38 (PHPHPHPHPHTPTHTHP).

This is an uncharacterized protein from Saccharomyces cerevisiae (strain ATCC 204508 / S288c) (Baker's yeast).